A 365-amino-acid polypeptide reads, in one-letter code: Endophilin-B1 (365 aa).

At M1 the chain carries N-acetylmethionine. The tract at residues 1–30 is membrane-binding amphipathic helix; it reads MNIMDFNVKKLAADAGTFLSRAVQFTEEKL. Positions 1–37 are required for membrane binding; it reads MNIMDFNVKKLAADAGTFLSRAVQFTEEKLGQAEKTE. The BAR domain occupies 27–261; the sequence is EEKLGQAEKT…LGSFPSNYLS (235 aa). T145 carries the post-translational modification Phosphothreonine; by CDK5. Residues 155–186 are a coiled coil; the sequence is YKTIAKERKLLQNKRLDLDAAKTRLKKAKAAE. The 61-residue stretch at 305 to 365 folds into the SH3 domain; that stretch reads SNNRKARVLY…VPITYLELLN (61 aa).

Belongs to the endophilin family. Homodimer, and heterodimer with SH3GLB2. Binds BAX; induction of apoptosis augments BAX binding. Binds DNM1, HTT, AMPH, BIN1 and ARFGAP1. Interacts with UVRAG; UVRAG bridges the interaction to BECN1 indicative for an association with the PI3K complex II (PI3KC3-C2). Isoform 3 interacts with PPP1CC; this interaction leads to the inhibition of phosphatase activity. Post-translationally, phosphorylated at Thr-145 by CDK5; this phosphorylation is required for autophagy induction in starved neurons and facilitates homodimerization. In terms of tissue distribution, isoform 1 is widely expressed. Isoform 2 is brain-specific. Isoform 3 is predominantly expressed in testis, but it is also detected in liver and, at much lower levels, in skin, stomach and ovary.

The protein resides in the cytoplasm. Its subcellular location is the golgi apparatus membrane. The protein localises to the mitochondrion outer membrane. It is found in the cytoplasmic vesicle. It localises to the autophagosome membrane. The protein resides in the midbody. Its function is as follows. May be required for normal outer mitochondrial membrane dynamics. Required for coatomer-mediated retrograde transport in certain cells. May recruit other proteins to membranes with high curvature. May promote membrane fusion. Involved in activation of caspase-dependent apoptosis by promoting BAX/BAK1 activation. Isoform 1 acts proapoptotic in fibroblasts. Involved in caspase-independent apoptosis during nutrition starvation and involved in the regulation of autophagy. Activates lipid kinase activity of PIK3C3 during autophagy probably by associating with the PI3K complex II (PI3KC3-C2). Associated with PI3KC3-C2 during autophagy may regulate the trafficking of ATG9A from the Golgi complex to the peripheral cytoplasm for the formation of autophagosomes by inducing Golgi membrane tubulation and fragmentation. Involved in regulation of degradative endocytic trafficking and cytokinesis, probably in the context of PI3KC3-C2. Isoform 2 acts antiapoptotic in neuronal cells; involved in maintenance of mitochondrial morphology and promotes neuronal viability. The sequence is that of Endophilin-B1 (Sh3glb1) from Mus musculus (Mouse).